We begin with the raw amino-acid sequence, 85 residues long: Sodium channel neurotoxin MeuNaTxalpha-1 (85 aa).

A signal peptide spans methionine 1 to serine 19. Residues arginine 21 to asparagine 83 enclose the LCN-type CS-alpha/beta domain. Residues aspartate 27–cysteine 31 are specificity module, loop 1. Cystine bridges form between cysteine 31–cysteine 82, cysteine 35–cysteine 55, cysteine 41–cysteine 65, and cysteine 45–cysteine 67. Specificity module, loop stretches follow at residues alanine 58–glycine 62 and proline 75–asparagine 83. At asparagine 83 the chain carries Asparagine amide.

It belongs to the long (4 C-C) scorpion toxin superfamily. Sodium channel inhibitor family. Alpha subfamily. In terms of processing, C-terminal amidation does not appear to play an important role in activity, since the non-amidated recombinant toxin and the native toxin (which is amidated) show similar activities on all sodium channels tested. As to expression, expressed by the venom gland.

It is found in the secreted. Its function is as follows. Alpha toxins bind voltage-independently at site-3 of sodium channels (Nav) and inhibit the inactivation of the activated channels, thereby blocking neuronal transmission. This toxin inhibits inactivation of Nav1.6/SCN8A (EC(50)=3.1 uM) and drosophila DmNav1 (EC(50)=1.17 uM). It also shows a weak inhibition of inactivation on Nav1.2/SCN2A Nav1.3/SCN3A, and Nav1.7/SCN9A. The toxin (1 uM) does not significantly shift the midpoint of activation at the two channels, but induces a significant depolarizing shift in the V(1/2) of inactivation of the channels. The toxin has also been shown to dose-dependently stimulates intracellular signaling in DRG neurons through activation of two kinases (type II protein kinase A (PKA-II) and MAP kinases 1/3 (MAPK1/MAPK3)). Nav1.2/SCN2A is strongly suggested to be the target channel predominantly involved in this activation. In vivo, the toxin induces a dose-dependent thermal hyperalgesia lasting 30-45 minutes. The sequence is that of Sodium channel neurotoxin MeuNaTxalpha-1 from Mesobuthus eupeus (Lesser Asian scorpion).